Reading from the N-terminus, the 151-residue chain is MNKTITPNPETLDQKWYVIDAADQRLGRLASEVAQILRGKNKPTFTPHMDTGDFVIIVNAEKVVVTGKKSSQKLYRRHSGRPGGMKVETFEKLQARLPERIVEHAVKGMLPKNSLGRKLFTKLKVYTGPTHPHQAQQPETLIVNTIPTGEN.

It belongs to the universal ribosomal protein uL13 family. In terms of assembly, part of the 50S ribosomal subunit.

Functionally, this protein is one of the early assembly proteins of the 50S ribosomal subunit, although it is not seen to bind rRNA by itself. It is important during the early stages of 50S assembly. The protein is Large ribosomal subunit protein uL13 of Rippkaea orientalis (strain PCC 8801 / RF-1) (Cyanothece sp. (strain PCC 8801)).